Here is a 67-residue protein sequence, read N- to C-terminus: MPQLDTSTWSITIMSMIMTLFIVFQLKISKYLYPSNPEPKSMTTLKQRNPWEKKWTKIYSPLSLPQQ.

Residues Thr-8–Phe-24 form a helical membrane-spanning segment. At Lys-54 the chain carries N6-acetyllysine; alternate. Lys-54 bears the N6-succinyllysine; alternate mark. Residue Lys-57 is modified to N6-acetyllysine.

Belongs to the ATPase protein 8 family. As to quaternary structure, component of the ATP synthase complex composed at least of ATP5F1A/subunit alpha, ATP5F1B/subunit beta, ATP5MC1/subunit c (homooctomer), MT-ATP6/subunit a, MT-ATP8/subunit 8, ATP5ME/subunit e, ATP5MF/subunit f, ATP5MG/subunit g, ATP5MK/subunit k, ATP5MJ/subunit j, ATP5F1C/subunit gamma, ATP5F1D/subunit delta, ATP5F1E/subunit epsilon, ATP5PF/subunit F6, ATP5PB/subunit b, ATP5PD/subunit d, ATP5PO/subunit OSCP. ATP synthase complex consists of a soluble F(1) head domain (subunits alpha(3) and beta(3)) - the catalytic core - and a membrane F(0) domain - the membrane proton channel (subunits c, a, 8, e, f, g, k and j). These two domains are linked by a central stalk (subunits gamma, delta, and epsilon) rotating inside the F1 region and a stationary peripheral stalk (subunits F6, b, d, and OSCP). Interacts with PRICKLE3.

Its subcellular location is the mitochondrion membrane. In terms of biological role, subunit 8, of the mitochondrial membrane ATP synthase complex (F(1)F(0) ATP synthase or Complex V) that produces ATP from ADP in the presence of a proton gradient across the membrane which is generated by electron transport complexes of the respiratory chain. ATP synthase complex consist of a soluble F(1) head domain - the catalytic core - and a membrane F(1) domain - the membrane proton channel. These two domains are linked by a central stalk rotating inside the F(1) region and a stationary peripheral stalk. During catalysis, ATP synthesis in the catalytic domain of F(1) is coupled via a rotary mechanism of the central stalk subunits to proton translocation. In vivo, can only synthesize ATP although its ATP hydrolase activity can be activated artificially in vitro. Part of the complex F(0) domain. In Felis catus (Cat), this protein is ATP synthase F(0) complex subunit 8.